A 379-amino-acid chain; its full sequence is Chaperone protein DnaJ (379 aa).

Residues 7–72 (CYYETLEVDR…DKRAAYDRYG (66 aa)) form the J domain. The CR-type zinc-finger motif lies at 135 to 213 (GKTAQIEIPV…CSGAGRIERE (79 aa)). Cys148, Cys151, Cys165, Cys168, Cys187, Cys190, Cys201, and Cys204 together coordinate Zn(2+). CXXCXGXG motif repeat units lie at residues 148 to 155 (CESCSGTG), 165 to 172 (CSMCGGAG), 187 to 194 (CPGCQGRG), and 201 to 208 (CPACSGAG).

Belongs to the DnaJ family. Homodimer. Zn(2+) is required as a cofactor.

It localises to the cytoplasm. Functionally, participates actively in the response to hyperosmotic and heat shock by preventing the aggregation of stress-denatured proteins and by disaggregating proteins, also in an autonomous, DnaK-independent fashion. Unfolded proteins bind initially to DnaJ; upon interaction with the DnaJ-bound protein, DnaK hydrolyzes its bound ATP, resulting in the formation of a stable complex. GrpE releases ADP from DnaK; ATP binding to DnaK triggers the release of the substrate protein, thus completing the reaction cycle. Several rounds of ATP-dependent interactions between DnaJ, DnaK and GrpE are required for fully efficient folding. Also involved, together with DnaK and GrpE, in the DNA replication of plasmids through activation of initiation proteins. This is Chaperone protein DnaJ from Rhodopseudomonas palustris (strain BisB18).